The primary structure comprises 332 residues: Glycerol-3-phosphate dehydrogenase [NAD(P)+] (332 aa).

Ser-11, Phe-12, Lys-32, and Lys-106 together coordinate NADPH. Sn-glycerol 3-phosphate contacts are provided by Lys-106, Gly-137, and Ser-139. Residue Ala-141 participates in NADPH binding. The sn-glycerol 3-phosphate site is built by Lys-192, Asp-245, Ser-255, Arg-256, and Asn-257. Catalysis depends on Lys-192, which acts as the Proton acceptor. NADPH is bound at residue Arg-256. Positions 280 and 282 each coordinate NADPH.

Belongs to the NAD-dependent glycerol-3-phosphate dehydrogenase family.

It localises to the cytoplasm. The enzyme catalyses sn-glycerol 3-phosphate + NAD(+) = dihydroxyacetone phosphate + NADH + H(+). The catalysed reaction is sn-glycerol 3-phosphate + NADP(+) = dihydroxyacetone phosphate + NADPH + H(+). Its pathway is membrane lipid metabolism; glycerophospholipid metabolism. In terms of biological role, catalyzes the reduction of the glycolytic intermediate dihydroxyacetone phosphate (DHAP) to sn-glycerol 3-phosphate (G3P), the key precursor for phospholipid synthesis. This Staphylococcus aureus (strain USA300) protein is Glycerol-3-phosphate dehydrogenase [NAD(P)+].